Consider the following 341-residue polypeptide: Putative ubiquitin-like-specific protease 1B (341 aa).

Active-site residues include His231, Asp248, and Cys300.

The protein belongs to the peptidase C48 family.

Its function is as follows. Protease that catalyzes two essential functions in the SUMO pathway: processing of full-length SUMOs to their mature forms and deconjugation of SUMO from targeted proteins. The polypeptide is Putative ubiquitin-like-specific protease 1B (ULP1B) (Arabidopsis thaliana (Mouse-ear cress)).